We begin with the raw amino-acid sequence, 182 residues long: Photosystem I assembly protein Ycf4 (182 aa).

Helical transmembrane passes span 22–42 (WAII…SSYL) and 66–86 (FYGI…LFSV).

The protein belongs to the Ycf4 family.

It localises to the plastid. Its subcellular location is the chloroplast thylakoid membrane. Seems to be required for the assembly of the photosystem I complex. The chain is Photosystem I assembly protein Ycf4 from Tupiella akineta (Green alga).